Consider the following 180-residue polypeptide: Hypoxanthine-guanine phosphoribosyltransferase (180 aa).

Diphosphate is bound by residues K43 and G44. The Mg(2+) site is built by E99 and D100. D103 acts as the Proton acceptor in catalysis. Residues K131, 152-153, and D159 each bind GMP; that span reads FV. R165 provides a ligand contact to diphosphate.

It belongs to the purine/pyrimidine phosphoribosyltransferase family. The cofactor is Mg(2+).

The protein resides in the cytoplasm. It carries out the reaction IMP + diphosphate = hypoxanthine + 5-phospho-alpha-D-ribose 1-diphosphate. The enzyme catalyses GMP + diphosphate = guanine + 5-phospho-alpha-D-ribose 1-diphosphate. It functions in the pathway purine metabolism; IMP biosynthesis via salvage pathway; IMP from hypoxanthine: step 1/1. It participates in purine metabolism; GMP biosynthesis via salvage pathway; GMP from guanine: step 1/1. In terms of biological role, purine salvage pathway enzyme that catalyzes the transfer of the ribosyl-5-phosphate group from 5-phospho-alpha-D-ribose 1-diphosphate (PRPP) to the N9 position of the 6-oxopurines hypoxanthine and guanine to form the corresponding ribonucleotides IMP (inosine 5'-monophosphate) and GMP (guanosine 5'-monophosphate), with the release of PPi. In Bacillus subtilis (strain 168), this protein is Hypoxanthine-guanine phosphoribosyltransferase (hprT).